The sequence spans 74 residues: Anionic peptide clone 10 (74 aa).

Residues M1–A24 form the signal peptide.

The protein belongs to the non-disulfide-bridged peptide (NDBP) superfamily. Long chain multifunctional peptide (group 2) family. As to expression, expressed by the venom gland.

Its subcellular location is the secreted. In terms of biological role, may be an antimicrobial peptide. The chain is Anionic peptide clone 10 from Tityus costatus (Brazilian scorpion).